Here is a 256-residue protein sequence, read N- to C-terminus: Minor capsid protein P7 (256 aa).

Hydrophobic stretches follow at residues 24-44 (LLFA…IIMK) and 47-67 (TKHM…IFML). Disulfide bonds link Cys-120–Cys-134, Cys-156–Cys-172, and Cys-188–Cys-211.

As to quaternary structure, interacts with the major capsid protein. In terms of processing, stabilized by 3 intramolecular disulfide bonds.

It localises to the virion. One of the minor capsid proteins that constitute a network internal to the major capsid proteins and outside the lipid membrane. The minor capsid proteins glue and stabilize the capsomers. The polypeptide is Minor capsid protein P7 (Paramecium bursaria Chlorella virus 1 (PBCV-1)).